We begin with the raw amino-acid sequence, 421 residues long: Aspartokinase (421 aa).

7–10 (KYGG) contributes to the ATP binding site. A substrate-binding site is contributed by 25 to 30 (RIVATK). Residue S41 coordinates ATP. Substrate is bound by residues 45-49 (DTTDD), E74, 125-126 (LE), 151-154 (RGGS), and S154. ATP is bound by residues 174–175 (TD), 180–185 (FSADPR), and K210. ACT domains lie at 267 to 348 (VTIV…GKVS) and 349 to 421 (LIGA…GTGR). Substrate is bound by residues D274, 274 to 279 (DIPGYA), 292 to 294 (NID), Q298, 360 to 361 (VT), 374 to 375 (NI), and 381 to 382 (SE).

Belongs to the aspartokinase family. Heterotetramer consisting of 2 isoforms Alpha (catalytic and regulation) and of a homodimer of 2 isoforms Beta (regulation).

The catalysed reaction is L-aspartate + ATP = 4-phospho-L-aspartate + ADP. The protein operates within amino-acid biosynthesis; L-lysine biosynthesis via DAP pathway; (S)-tetrahydrodipicolinate from L-aspartate: step 1/4. Its pathway is amino-acid biosynthesis; L-methionine biosynthesis via de novo pathway; L-homoserine from L-aspartate: step 1/3. It functions in the pathway amino-acid biosynthesis; L-threonine biosynthesis; L-threonine from L-aspartate: step 1/5. With respect to regulation, feedback inhibition by lysine and threonine. Functionally, catalyzes the phosphorylation of the beta-carboxyl group of aspartic acid with ATP to yield 4-phospho-L-aspartate, which is involved in the branched biosynthetic pathway leading to the biosynthesis of amino acids lysine, threonine, isoleucine and methionine. The protein is Aspartokinase (ask) of Mycobacterium bovis (strain ATCC BAA-935 / AF2122/97).